Here is a 542-residue protein sequence, read N- to C-terminus: MFS thioclapurine efflux transporter tcpA (542 aa).

Positions 1 to 10 are enriched in basic and acidic residues; sequence MATVGTEEKN. The disordered stretch occupies residues 1–24; it reads MATVGTEEKNPIGSASNTAEPNVT. Polar residues predominate over residues 13–24; that stretch reads GSASNTAEPNVT. Residue N22 is glycosylated (N-linked (GlcNAc...) asparagine). 3 consecutive transmembrane segments (helical) span residues 32–52, 75–97, and 103–123; these read SGFK…LCGL, GWYT…KLYT, and MILL…AAAP. N-linked (GlcNAc...) asparagine glycosylation occurs at N124. The next 6 helical transmembrane spans lie at 133 to 153, 161 to 181, 193 to 213, 234 to 254, 265 to 285, and 307 to 327; these read AIAG…LVHA, ALLG…PFIG, CFII…FFVF, IPEI…LQWG, IIAL…LQVL, and IFAL…PIYF. N332 carries N-linked (GlcNAc...) asparagine glycosylation. A helical membrane pass occupies residues 339 to 359; that stretch reads GVNVMPLILGFLVMSIISGVI. N-linked (GlcNAc...) asparagine glycosylation is present at N361. The next 4 membrane-spanning stretches (helical) occupy residues 370–390, 396–416, 427–447, and 500–520; these read MFLC…FDVG, WIGY…QPIV, VPFG…IFVA, and VLGQ…LGSL.

The protein belongs to the major facilitator superfamily.

The protein resides in the cell membrane. Its function is as follows. MFS efflux transporter probably involved in thioclapurine export. In Claviceps purpurea (strain 20.1) (Ergot fungus), this protein is MFS thioclapurine efflux transporter tcpA.